Reading from the N-terminus, the 412-residue chain is MKGSNIRRWGAALAVVIIAGAAYWFWHDRGTSGSGAPAAGQGPQGPGGARHGRFGAALAPVQAATATEEAVPRYLTGLGTVTAANTVTVRSRVDGQLLSLHFQEGQQVKAGDLLAQIDPSQFKVALAQAQGQLAKDQATLANARRDLARYQQLVKTNLVSRQELDTQQSLVVESAGTVKADEAAVASAQLQLDWTRITAPIDGRVGLKQVDIGNQISSGDTTGIVVLTQTHPIDVVFTLPESSIATVVQAQKAGKALSVEAWDRTNKQKISVGELLSLDNQIDATTGTIKLKARFSNLDDALFPNQFVNARLLVDTQQNAVVIPAAALQMGNEGHFVWVLNDENKVSKHSVTPGIQDSQKVVISAGLSAGDRVVTDGIDRLTEGAKVEVVTASSGEQAQPAPRQSGKHGARS.

The N-terminal stretch at 1 to 21 (MKGSNIRRWGAALAVVIIAGA) is a signal peptide. Disordered regions lie at residues 33-53 (GSGA…RHGR) and 389-412 (VVTA…GARS).

It belongs to the membrane fusion protein (MFP) (TC 8.A.1) family. As to quaternary structure, part of a tripartite efflux system composed of MdtA, MdtB and MdtC.

It is found in the cell inner membrane. The chain is Multidrug resistance protein MdtA from Klebsiella pneumoniae subsp. pneumoniae (strain ATCC 700721 / MGH 78578).